The sequence spans 201 residues: FMN-dependent NADH:quinone oxidoreductase (201 aa).

Residues S10, 16–18 (SQS), 95–98 (MYNF), and 139–142 (TTGG) each bind FMN.

The protein belongs to the azoreductase type 1 family. As to quaternary structure, homodimer. FMN is required as a cofactor.

It carries out the reaction 2 a quinone + NADH + H(+) = 2 a 1,4-benzosemiquinone + NAD(+). The enzyme catalyses N,N-dimethyl-1,4-phenylenediamine + anthranilate + 2 NAD(+) = 2-(4-dimethylaminophenyl)diazenylbenzoate + 2 NADH + 2 H(+). In terms of biological role, quinone reductase that provides resistance to thiol-specific stress caused by electrophilic quinones. Functionally, also exhibits azoreductase activity. Catalyzes the reductive cleavage of the azo bond in aromatic azo compounds to the corresponding amines. The chain is FMN-dependent NADH:quinone oxidoreductase from Tolumonas auensis (strain DSM 9187 / NBRC 110442 / TA 4).